A 465-amino-acid polypeptide reads, in one-letter code: 5-cytosine rRNA methyltransferase nsun-4 (465 aa).

The transit peptide at M1 to Q6 directs the protein to the mitochondrion. Residues Q106–I130 show a composition bias toward basic and acidic residues. Residues Q106–D145 are disordered. Residues C260 to K266, D283, D316, and D335 contribute to the S-adenosyl-L-methionine site. Catalysis depends on C390, which acts as the Nucleophile.

Belongs to the class I-like SAM-binding methyltransferase superfamily. RsmB/NOP family.

It is found in the mitochondrion. The enzyme catalyses a cytidine in rRNA + S-adenosyl-L-methionine = a 5-methylcytidine in rRNA + S-adenosyl-L-homocysteine + H(+). It catalyses the reaction a cytidine in tRNA + S-adenosyl-L-methionine = a 5-methylcytidine in tRNA + S-adenosyl-L-homocysteine + H(+). Mitochondrial methyltransferase which methylates cytosine to 5-methylcytosine (m5C) in rRNAs and tRNAs at multiple sites. May play a role in the translation of leucine and proline codons. The protein is 5-cytosine rRNA methyltransferase nsun-4 of Caenorhabditis elegans.